A 172-amino-acid chain; its full sequence is Ribosome maturation factor RimM (172 aa).

Residues 96–169 form the PRC barrel domain; it reads EGYFYHFQLQ…RMEIKLLPGL (74 aa).

This sequence belongs to the RimM family. As to quaternary structure, binds ribosomal protein uS19.

It is found in the cytoplasm. Functionally, an accessory protein needed during the final step in the assembly of 30S ribosomal subunit, possibly for assembly of the head region. Essential for efficient processing of 16S rRNA. May be needed both before and after RbfA during the maturation of 16S rRNA. It has affinity for free ribosomal 30S subunits but not for 70S ribosomes. The chain is Ribosome maturation factor RimM from Syntrophomonas wolfei subsp. wolfei (strain DSM 2245B / Goettingen).